The chain runs to 183 residues: Probable calcium-binding protein CML47 (183 aa).

2 EF-hand domains span residues 112–147 and 149–183; these read MGKEIVKEAFRLFDENQDGFIDENELKHVLSLLGYD and CTKMECRKMVKVYDENRDGKIDFYEFVKLIEKSFS. Ca(2+) contacts are provided by D125, N127, D129, E136, D162, N164, D166, K168, and E173.

In terms of biological role, potential calcium sensor. The protein is Probable calcium-binding protein CML47 (CML47) of Arabidopsis thaliana (Mouse-ear cress).